The primary structure comprises 497 residues: L-amino-acid oxidase BjussuLAAO-I (497 aa).

The signal sequence occupies residues 1 to 13 (MNVFFMFSKPGKL). C23 and C186 are disulfide-bonded. FAD-binding positions include 56-57 (MS), 76-77 (EA), 76-80 (EASER), Q84, and 100-103 (GPMR). R103 is a substrate binding site. An N-linked (GlcNAc...) asparagine glycan is attached at N185. Residue H236 coordinates substrate. FAD is bound at residue V274. A disulfide bond links C344 and C425. Residue Y385 participates in substrate binding. FAD-binding positions include E470, 477–482 (GWIAST), and 478–482 (WIAST). 477–478 (GW) is a binding site for substrate.

The protein belongs to the flavin monoamine oxidase family. FIG1 subfamily. Homodimer; non-covalently linked. The cofactor is FAD. As to expression, expressed by the venom gland.

It is found in the secreted. It carries out the reaction an L-alpha-amino acid + O2 + H2O = a 2-oxocarboxylate + H2O2 + NH4(+). It catalyses the reaction L-leucine + O2 + H2O = 4-methyl-2-oxopentanoate + H2O2 + NH4(+). The catalysed reaction is L-phenylalanine + O2 + H2O = 3-phenylpyruvate + H2O2 + NH4(+). The enzyme catalyses L-tryptophan + O2 + H2O = indole-3-pyruvate + H2O2 + NH4(+). It carries out the reaction L-methionine + O2 + H2O = 4-methylsulfanyl-2-oxobutanoate + H2O2 + NH4(+). It catalyses the reaction L-isoleucine + O2 + H2O = (S)-3-methyl-2-oxopentanoate + H2O2 + NH4(+). The catalysed reaction is L-tyrosine + O2 + H2O = 3-(4-hydroxyphenyl)pyruvate + H2O2 + NH4(+). The enzyme catalyses L-cysteine + O2 + H2O = 2-oxo-3-sulfanylpropanoate + H2O2 + NH4(+). Catalyzes an oxidative deamination of predominantly hydrophobic and aromatic L-amino acids, thus producing hydrogen peroxide that may contribute to the diverse toxic effects of this enzyme. Shows high specificity for L-Met, L-Leu, L-Phe, L-Tyr, L-Ile, L-Trp, a moderate activity on L-Cys and low activity on L-Val, L-Lys, L-Arg, L-His, L-Gln, L-Thr and L-Ser. Exhibits diverse biological activities, such as hemorrhage, hemolysis, edema, apoptosis of vascular endothelial cells or tumor cell lines, and antibacterial, as well as regulation of platelet aggregation. Effects of snake L-amino oxidases on platelets are controversial, since they either induce aggregation or inhibit agonist-induced aggregation. These different effects are probably due to different experimental conditions. In vitro, shows parasiticidal activities against both trypanosomes and leishmania, as a result of enzyme-catalyzed hydrogen peroxide production. This is L-amino-acid oxidase BjussuLAAO-I from Bothrops jararacussu (Jararacussu).